A 555-amino-acid chain; its full sequence is Carboxylesterase patB (555 aa).

A signal peptide spans 1 to 16 (MLFTASLLLLLPWASA). Asn37 and Asn75 each carry an N-linked (GlcNAc...) asparagine glycan. Ser258 acts as the Acyl-ester intermediate in catalysis. Ser258 is a binding site for substrate. Asn311 carries an N-linked (GlcNAc...) asparagine glycan. Glu380 (charge relay system) is an active-site residue. Asn388 and Asn491 each carry an N-linked (GlcNAc...) asparagine glycan.

This sequence belongs to the type-B carboxylesterase/lipase family.

The protein localises to the cytoplasm. It localises to the cytosol. The enzyme catalyses a carboxylic ester + H2O = an alcohol + a carboxylate + H(+). The protein operates within mycotoxin biosynthesis; patulin biosynthesis. Carboxylesterase; part of the gene cluster that mediates the biosynthesis of patulin, an acetate-derived tetraketide mycotoxin produced by several fungal species that shows antimicrobial properties against several bacteria. The function of patB in patulin synthesis has still to be characterized. The pathway begins with the synthesis of 6-methylsalicylic acid by the polyketide synthase (PKS) patK via condensation of acetate and malonate units. The 6-methylsalicylic acid decarboxylase patG then catalyzes the decarboxylation of 6-methylsalicylic acid to yield m-cresol (also known as 3-methylphenol). These first reactions occur in the cytosol. The intermediate m-cresol is then transported into the endoplasmic reticulum where the cytochrome P450 monooxygenase patH converts it to m-hydroxybenzyl alcohol, which is further converted to gentisyl alcohol by the cytochrome P450 monooxygenase patI. The oxidoreductases patJ and patO further convert gentisyl alcohol to isoepoxydon in the vacuole. PatN catalyzes then the transformation of isoepoxydon into phyllostine. The cluster protein patF is responsible for the conversion from phyllostine to neopatulin whereas the alcohol dehydrogenase patD converts neopatulin to E-ascladiol. The steps between isoepoxydon and E-ascladiol occur in the cytosol, and E-ascladiol is probably secreted to the extracellular space by one of the cluster-specific transporters patC or patM. Finally, the secreted patulin synthase patE catalyzes the conversion of E-ascladiol to patulin. In Aspergillus clavatus (strain ATCC 1007 / CBS 513.65 / DSM 816 / NCTC 3887 / NRRL 1 / QM 1276 / 107), this protein is Carboxylesterase patB.